Reading from the N-terminus, the 985-residue chain is Regulator of telomere elongation helicase 1 homolog (985 aa).

A Helicase ATP-binding domain is found at 7–303 (AGIPVHFPFE…QDMGGDEPKD (297 aa)). 42 to 49 (SPTGTGKT) contributes to the ATP binding site. Cys146, Cys164, Cys173, and Cys209 together coordinate [4Fe-4S] cluster. The DEAH box signature appears at 252-255 (DEAH). Positions 858–884 (GSSGMVKIHKRERSSPTQPESSSQVSK) are disordered. Residues 872–882 (SPTQPESSSQV) show a composition bias toward polar residues. Phosphothreonine is present on Thr874.

The protein belongs to the helicase family. RAD3/XPD subfamily.

Its subcellular location is the nucleus. It carries out the reaction ATP + H2O = ADP + phosphate + H(+). In terms of biological role, a probable ATP-dependent DNA helicase implicated in DNA repair and the maintenance of genomic stability. Acts as an anti-recombinase to counteract toxic recombination and limit crossover during meiosis. Regulates meiotic recombination and crossover homeostasis by physically dissociating strand invasion events and thereby promotes noncrossover repair by meiotic synthesis dependent strand annealing (SDSA) as well as disassembly of D loop recombination intermediates. The protein is Regulator of telomere elongation helicase 1 homolog of Drosophila yakuba (Fruit fly).